A 192-amino-acid polypeptide reads, in one-letter code: UPF0149 protein Spro_3920 (192 aa).

Belongs to the UPF0149 family.

In Serratia proteamaculans (strain 568), this protein is UPF0149 protein Spro_3920.